The following is a 92-amino-acid chain: MARTVNCQYLKKEADGLAFQLYPGELGKRIFDNISQEAWSLWQAKQTMLINEKKLNMMNVDDRKFLEEQMVNFLFEGKEVEIEGYVPQKDDE.

This sequence belongs to the Fe(2+)-trafficking protein family.

Functionally, could be a mediator in iron transactions between iron acquisition and iron-requiring processes, such as synthesis and/or repair of Fe-S clusters in biosynthetic enzymes. The chain is Probable Fe(2+)-trafficking protein from Shewanella loihica (strain ATCC BAA-1088 / PV-4).